Here is a 150-residue protein sequence, read N- to C-terminus: Cytochrome b5 type B (150 aa).

Positions 1 to 15 are excised as a propeptide; it reads MSGSMATAEASGSDG. The disordered stretch occupies residues 1-20; sequence MSGSMATAEASGSDGKGQEV. Ser-23 is modified (phosphoserine). Residues 24–100 form the Cytochrome b5 heme-binding domain; that stretch reads VTYYRLEEVA…LKQYYIGDIH (77 aa). Lys-34 bears the N6-acetyllysine mark. Ser-37 is modified (phosphoserine). The residue at position 39 (Lys-39) is an N6-methyllysine. Heme-binding residues include His-59 and His-83. At Ser-84 the chain carries Phosphoserine. Residues 123–140 traverse the membrane as a helical segment; the sequence is WAYWILPIIGAVLLGFLY.

Belongs to the cytochrome b5 family. Component of a complex composed of cytochrome b5, NADH-cytochrome b5 reductase (CYB5R3) and MTARC2.

The protein resides in the mitochondrion outer membrane. Functionally, cytochrome b5 is a membrane-bound hemoprotein functioning as an electron carrier for several membrane-bound oxygenases. The polypeptide is Cytochrome b5 type B (CYB5B) (Homo sapiens (Human)).